The sequence spans 212 residues: 3-isopropylmalate dehydratase small subunit 2 (212 aa).

It belongs to the LeuD family. LeuD type 1 subfamily. As to quaternary structure, heterodimer of LeuC and LeuD.

It catalyses the reaction (2R,3S)-3-isopropylmalate = (2S)-2-isopropylmalate. It functions in the pathway amino-acid biosynthesis; L-leucine biosynthesis; L-leucine from 3-methyl-2-oxobutanoate: step 2/4. Catalyzes the isomerization between 2-isopropylmalate and 3-isopropylmalate, via the formation of 2-isopropylmaleate. The sequence is that of 3-isopropylmalate dehydratase small subunit 2 from Chromobacterium violaceum (strain ATCC 12472 / DSM 30191 / JCM 1249 / CCUG 213 / NBRC 12614 / NCIMB 9131 / NCTC 9757 / MK).